We begin with the raw amino-acid sequence, 60 residues long: MVSGKRIADVGYRLFSGSMMLLTVYGGYLCVVRAQRYMQRKKQLELAAQSENTASEIIKE.

The helical transmembrane segment at 10 to 32 (VGYRLFSGSMMLLTVYGGYLCVV) threads the bilayer.

Its subcellular location is the mitochondrion membrane. Functionally, plays a role in the assembly or stability of the cytochrome c oxidase complex (COX). The chain is Cytochrome c oxidase assembly protein COX14 homolog from Danio rerio (Zebrafish).